A 99-amino-acid polypeptide reads, in one-letter code: Probable non-specific lipid-transfer protein AKCS9 (99 aa).

The signal sequence occupies residues 1-33 (MTMKMKMKMSVVCAVVVVALFLIDVGPVAEAVT). Disulfide bonds link C34–C68, C42–C56, C57–C92, and C66–C99.

The protein belongs to the plant LTP family. As to expression, expressed in most tissues except nodules.

In terms of biological role, potential lipid transfer protein. This Vigna unguiculata (Cowpea) protein is Probable non-specific lipid-transfer protein AKCS9.